A 256-amino-acid chain; its full sequence is Alcohol dehydrogenase (256 aa).

Residue 12 to 35 (FVAGLGGIGLDTSREIVKAGPKNL) participates in NAD(+) binding. Serine 140 contributes to the substrate binding site. Catalysis depends on tyrosine 153, which acts as the Proton acceptor.

The protein belongs to the short-chain dehydrogenases/reductases (SDR) family. In terms of assembly, homodimer.

It carries out the reaction a primary alcohol + NAD(+) = an aldehyde + NADH + H(+). The enzyme catalyses a secondary alcohol + NAD(+) = a ketone + NADH + H(+). The chain is Alcohol dehydrogenase (Adh) from Zaprionus tuberculatus (Vinegar fly).